Reading from the N-terminus, the 89-residue chain is Small ribosomal subunit protein uS17 (89 aa).

This sequence belongs to the universal ribosomal protein uS17 family. In terms of assembly, part of the 30S ribosomal subunit.

One of the primary rRNA binding proteins, it binds specifically to the 5'-end of 16S ribosomal RNA. The sequence is that of Small ribosomal subunit protein uS17 from Verminephrobacter eiseniae (strain EF01-2).